Here is a 196-residue protein sequence, read N- to C-terminus: Orotate phosphoribosyltransferase (196 aa).

117 to 125 (EDIVTTGLS) is a binding site for 5-phospho-alpha-D-ribose 1-diphosphate. Orotate contacts are provided by Thr121 and Arg149.

It belongs to the purine/pyrimidine phosphoribosyltransferase family. PyrE subfamily. Homodimer. The cofactor is Mg(2+).

The enzyme catalyses orotidine 5'-phosphate + diphosphate = orotate + 5-phospho-alpha-D-ribose 1-diphosphate. Its pathway is pyrimidine metabolism; UMP biosynthesis via de novo pathway; UMP from orotate: step 1/2. Functionally, catalyzes the transfer of a ribosyl phosphate group from 5-phosphoribose 1-diphosphate to orotate, leading to the formation of orotidine monophosphate (OMP). The sequence is that of Orotate phosphoribosyltransferase from Methylorubrum populi (strain ATCC BAA-705 / NCIMB 13946 / BJ001) (Methylobacterium populi).